The sequence spans 354 residues: Probable protein phosphatase 2C 69 (354 aa).

The PPM-type phosphatase domain occupies 33 to 279; that stretch reads SYGYASSAGK…DNITCVVVRF (247 aa). Mn(2+) is bound by residues aspartate 69, glycine 70, aspartate 231, and aspartate 270. Positions 289 to 354 are disordered; that stretch reads HISSSSSKEA…LERNSVTDKV (66 aa). Polar residues-rich tracts occupy residues 309–328 and 336–348; these read ISSN…PENV and ASRS…LERN.

The protein belongs to the PP2C family. It depends on Mg(2+) as a cofactor. Requires Mn(2+) as cofactor.

The catalysed reaction is O-phospho-L-seryl-[protein] + H2O = L-seryl-[protein] + phosphate. It catalyses the reaction O-phospho-L-threonyl-[protein] + H2O = L-threonyl-[protein] + phosphate. This Arabidopsis thaliana (Mouse-ear cress) protein is Probable protein phosphatase 2C 69.